We begin with the raw amino-acid sequence, 455 residues long: MGLSVIILAAGQGKRMASSTPKILHPLGGIPLLERVVNTARLLNPHTIHVVYGNGGSHVREKLNYLPVHWIEQSQQLGTGHAVLQAIPFCQNEDRVLILYGDVPLISPKTLNSLLENTPSNGLGVVVAELPDPTGLGRIIRDDFGNILSIVEHKDVAEHQLKIREINTGIMTTTAMNLKKWLPQLNNNNCQKEYYLTDTVALAVAEGCPVGGVAAQCCEEVQGVNDRWELTKLERYYQRLMAKKLSLAGVTIIDPERFDARGENIEIAPDVVIDVNVILEGNVQLDRNVRIGPNVILKNTTVGENTEIHANSVIEAAVIKANCSVGPFARLRPGSVLEEGAKVGNFVEMKKTTLGRGSKANHLTYLGDTIIGKNVNVGAGTITCNYDGANKWQTKIEDGAFIGSNVALVAPLTVGKNATIGAGSTLSQDAPPDQLTVARERQRTIKGWHRPTKKE.

The segment at 1–227 is pyrophosphorylase; the sequence is MGLSVIILAA…CEEVQGVNDR (227 aa). Residues 8 to 11, lysine 22, glutamine 73, 78 to 79, 100 to 102, glycine 137, glutamate 152, asparagine 167, and asparagine 225 contribute to the UDP-N-acetyl-alpha-D-glucosamine site; these read LAAG, GT, and YGD. Aspartate 102 is a binding site for Mg(2+). Asparagine 225 is a binding site for Mg(2+). The segment at 228-248 is linker; that stretch reads WELTKLERYYQRLMAKKLSLA. Residues 249–455 form an N-acetyltransferase region; the sequence is GVTIIDPERF…KGWHRPTKKE (207 aa). Residues arginine 332 and lysine 350 each contribute to the UDP-N-acetyl-alpha-D-glucosamine site. Histidine 362 functions as the Proton acceptor in the catalytic mechanism. Residues tyrosine 365 and asparagine 376 each contribute to the UDP-N-acetyl-alpha-D-glucosamine site. Acetyl-CoA-binding positions include alanine 379, 385 to 386, serine 404, alanine 422, and arginine 439; that span reads NY.

In the N-terminal section; belongs to the N-acetylglucosamine-1-phosphate uridyltransferase family. The protein in the C-terminal section; belongs to the transferase hexapeptide repeat family. As to quaternary structure, homotrimer. Requires Mg(2+) as cofactor.

It is found in the cytoplasm. It carries out the reaction alpha-D-glucosamine 1-phosphate + acetyl-CoA = N-acetyl-alpha-D-glucosamine 1-phosphate + CoA + H(+). It catalyses the reaction N-acetyl-alpha-D-glucosamine 1-phosphate + UTP + H(+) = UDP-N-acetyl-alpha-D-glucosamine + diphosphate. It participates in nucleotide-sugar biosynthesis; UDP-N-acetyl-alpha-D-glucosamine biosynthesis; N-acetyl-alpha-D-glucosamine 1-phosphate from alpha-D-glucosamine 6-phosphate (route II): step 2/2. Its pathway is nucleotide-sugar biosynthesis; UDP-N-acetyl-alpha-D-glucosamine biosynthesis; UDP-N-acetyl-alpha-D-glucosamine from N-acetyl-alpha-D-glucosamine 1-phosphate: step 1/1. The protein operates within bacterial outer membrane biogenesis; LPS lipid A biosynthesis. In terms of biological role, catalyzes the last two sequential reactions in the de novo biosynthetic pathway for UDP-N-acetylglucosamine (UDP-GlcNAc). The C-terminal domain catalyzes the transfer of acetyl group from acetyl coenzyme A to glucosamine-1-phosphate (GlcN-1-P) to produce N-acetylglucosamine-1-phosphate (GlcNAc-1-P), which is converted into UDP-GlcNAc by the transfer of uridine 5-monophosphate (from uridine 5-triphosphate), a reaction catalyzed by the N-terminal domain. This Coxiella burnetii (strain Dugway 5J108-111) protein is Bifunctional protein GlmU.